The chain runs to 272 residues: 2,3,4,5-tetrahydropyridine-2,6-dicarboxylate N-succinyltransferase (272 aa).

Positions 104 and 141 each coordinate substrate.

Belongs to the transferase hexapeptide repeat family. Homotrimer.

It localises to the cytoplasm. It catalyses the reaction (S)-2,3,4,5-tetrahydrodipicolinate + succinyl-CoA + H2O = (S)-2-succinylamino-6-oxoheptanedioate + CoA. It participates in amino-acid biosynthesis; L-lysine biosynthesis via DAP pathway; LL-2,6-diaminopimelate from (S)-tetrahydrodipicolinate (succinylase route): step 1/3. This Dechloromonas aromatica (strain RCB) protein is 2,3,4,5-tetrahydropyridine-2,6-dicarboxylate N-succinyltransferase.